Here is a 955-residue protein sequence, read N- to C-terminus: Leucine--tRNA ligase (955 aa).

Residues 66–77 (PYPSGSGLHVGH) carry the 'HIGH' region motif. A 'KMSKS' region motif is present at residues 725–729 (KMGKS). Lys728 contributes to the ATP binding site.

The protein belongs to the class-I aminoacyl-tRNA synthetase family.

The protein localises to the cytoplasm. The enzyme catalyses tRNA(Leu) + L-leucine + ATP = L-leucyl-tRNA(Leu) + AMP + diphosphate. This chain is Leucine--tRNA ligase, found in Saccharopolyspora erythraea (strain ATCC 11635 / DSM 40517 / JCM 4748 / NBRC 13426 / NCIMB 8594 / NRRL 2338).